The following is a 308-amino-acid chain: Regulating synaptic membrane exocytosis protein 3 (308 aa).

Residues 86–120 (STETGIAVEMRSRVTRQGSRESTDGSTNSNSSDGT) are disordered. The segment covering 109–120 (DGSTNSNSSDGT) has biased composition (low complexity). A C2 domain is found at 156–274 (PMGDVHIAIM…DLSAAVTGWY (119 aa)). S295 and S298 each carry phosphoserine.

Binds PPFIA3. Does not bind RAB3.

The protein resides in the synapse. Regulates synaptic membrane exocytosis. This is Regulating synaptic membrane exocytosis protein 3 (RIMS3) from Homo sapiens (Human).